The primary structure comprises 74 residues: CLAVATA3/ESR (CLE)-related protein 19 (74 aa).

The N-terminal stretch at 1 to 24 (MKIKGLMILASSLLILAFIHQSES) is a signal peptide. N34 and N54 each carry an N-linked (GlcNAc...) asparagine glycan. P65 and P68 each carry hydroxyproline. P68 carries an O-linked (Ara...) hydroxyproline glycan.

It belongs to the CLV3/ESR signal peptide family. Post-translationally, the O-glycosylation (arabinosylation) of the hydroxyproline Pro-68 enhances binding affinity of the CLE19p peptide for its receptor. In terms of tissue distribution, mostly expressed in heart-shape embryos, pollen and young flower buds, and, to a lower extent, in inflorescence, leaves and roots.

It is found in the secreted. The protein localises to the extracellular space. In terms of biological role, extracellular signal peptide that regulates cell fate. Represses root apical meristem maintenance. The chain is CLAVATA3/ESR (CLE)-related protein 19 from Arabidopsis thaliana (Mouse-ear cress).